The sequence spans 207 residues: Methylated-DNA--protein-cysteine methyltransferase (207 aa).

C5 contacts Zn(2+). The residue at position 14 (S14) is a Phosphoserine. C24, H29, and H85 together coordinate Zn(2+). Residues T95, Y114, Q115, N123, and R128 each contribute to the DNA site. C145 (nucleophile; methyl group acceptor) is an active-site residue. S151 serves as a coordination point for DNA. Residue S201 is modified to Phosphoserine.

This sequence belongs to the MGMT family. Requires Zn(2+) as cofactor.

The protein resides in the nucleus. The catalysed reaction is a 6-O-methyl-2'-deoxyguanosine in DNA + L-cysteinyl-[protein] = S-methyl-L-cysteinyl-[protein] + a 2'-deoxyguanosine in DNA. It catalyses the reaction a 4-O-methyl-thymidine in DNA + L-cysteinyl-[protein] = a thymidine in DNA + S-methyl-L-cysteinyl-[protein]. Its function is as follows. Involved in the cellular defense against the biological effects of O6-methylguanine (O6-MeG) and O4-methylthymine (O4-MeT) in DNA. Repairs the methylated nucleobase in DNA by stoichiometrically transferring the methyl group to a cysteine residue in the enzyme. This is a suicide reaction: the enzyme is irreversibly inactivated. This is Methylated-DNA--protein-cysteine methyltransferase (MGMT) from Homo sapiens (Human).